A 311-amino-acid chain; its full sequence is Cell division protein ZipA (311 aa).

Residues 1-5 are Periplasmic-facing; that stretch reads MQELR. Residues 6–26 traverse the membrane as a helical segment; the sequence is FVLIVVGALAIMALLFHGLWT. Over 27–311 the chain is Cytoplasmic; the sequence is SKKEGKAKFG…QIVEFKAANA (285 aa). Residues 32-54 show a composition bias toward basic and acidic residues; the sequence is KAKFGDKPLSKLDLGESEPKESE. Residues 32–60 form a disordered region; sequence KAKFGDKPLSKLDLGESEPKESEMYVAPE.

Belongs to the ZipA family. As to quaternary structure, interacts with FtsZ via their C-terminal domains.

It localises to the cell inner membrane. Essential cell division protein that stabilizes the FtsZ protofilaments by cross-linking them and that serves as a cytoplasmic membrane anchor for the Z ring. Also required for the recruitment to the septal ring of downstream cell division proteins. This Vibrio vulnificus (strain YJ016) protein is Cell division protein ZipA.